Reading from the N-terminus, the 194-residue chain is SRP-independent targeting protein 3 homolog (194 aa).

2 helical membrane passes run 43–63 (ILYA…KIII) and 110–130 (LVTI…PPLL).

This sequence belongs to the PHO88 family.

Its subcellular location is the endoplasmic reticulum membrane. May function in a SRP (signal recognition particle) and GET (guided entry of tail-anchored proteins) independent pathway for targeting a broad range of substrate proteins to the endoplasmic reticulum. Involved in inorganic phosphate uptake. Also involved in telomere length regulation and maintenance. In Schizosaccharomyces pombe (strain 972 / ATCC 24843) (Fission yeast), this protein is SRP-independent targeting protein 3 homolog.